The sequence spans 546 residues: Probable protein kinase UbiB (546 aa).

The Protein kinase domain occupies 124–502; sequence DFEIKPLASA…HVRQGQSRYF (379 aa). Residues 130–138 and Lys-153 each bind ATP; that span reads LASASIAQV. Catalysis depends on Asp-288, which acts as the Proton acceptor. Helical transmembrane passes span 501–521 and 522–542; these read YFLG…VSRP and EWGL…FVGW.

This sequence belongs to the ABC1 family. UbiB subfamily.

Its subcellular location is the cell inner membrane. The protein operates within cofactor biosynthesis; ubiquinone biosynthesis [regulation]. Functionally, is probably a protein kinase regulator of UbiI activity which is involved in aerobic coenzyme Q (ubiquinone) biosynthesis. This chain is Probable protein kinase UbiB, found in Escherichia coli (strain SMS-3-5 / SECEC).